The following is an 800-amino-acid chain: Phenylalanine--tRNA ligase beta subunit (800 aa).

A tRNA-binding domain is found at 39 to 154 (TKDIKNLVVG…ESQVPGTDAL (116 aa)). A B5 domain is found at 408-483 (AFITPIDITA…RIYGYDDIPS (76 aa)). Mg(2+) contacts are provided by aspartate 461, aspartate 467, glutamate 470, and glutamate 471. The FDX-ACB domain maps to 708-800 (PRFPGMSRDI…ALIEQGAVIR (93 aa)).

Belongs to the phenylalanyl-tRNA synthetase beta subunit family. Type 1 subfamily. Tetramer of two alpha and two beta subunits. Requires Mg(2+) as cofactor.

It localises to the cytoplasm. It catalyses the reaction tRNA(Phe) + L-phenylalanine + ATP = L-phenylalanyl-tRNA(Phe) + AMP + diphosphate + H(+). The protein is Phenylalanine--tRNA ligase beta subunit of Staphylococcus aureus.